We begin with the raw amino-acid sequence, 505 residues long: AAA-ATPase At5g17760 (505 aa).

A helical transmembrane segment spans residues 11–27 (TSVFTAYASMAGYMMMI). Residues 136-155 (GGGGGVGGRGGGGGRRGGMD) are disordered. Over residues 137–151 (GGGGVGGRGGGGGRR) the composition is skewed to gly residues. Position 260–267 (260–267 (GPPGTGKS)) interacts with ATP.

Belongs to the AAA ATPase family. BCS1 subfamily. The cofactor is Mg(2+).

The protein localises to the membrane. It carries out the reaction ATP + H2O = ADP + phosphate + H(+). This chain is AAA-ATPase At5g17760, found in Arabidopsis thaliana (Mouse-ear cress).